A 363-amino-acid polypeptide reads, in one-letter code: Uptake hydrogenase small subunit (363 aa).

Residues Met1–Ala46 constitute a signal peptide (tat-type signal). [4Fe-4S] cluster-binding residues include Cys63, Cys66, Cys161, Cys195, His233, Cys236, Cys261, and Cys267. [3Fe-4S] cluster-binding residues include Cys276, Cys295, and Cys298.

It belongs to the [NiFe]/[NiFeSe] hydrogenase small subunit family. As to quaternary structure, heterodimer of a large and a small subunit. Requires [4Fe-4S] cluster as cofactor. The cofactor is [3Fe-4S] cluster. Post-translationally, predicted to be exported by the Tat system. The position of the signal peptide cleavage has not been experimentally proven.

Its subcellular location is the cell membrane. It carries out the reaction H2 + A = AH2. Its function is as follows. This enzyme recycles the H(2) produced by nitrogenase to increase the production of ATP and to protect nitrogenase against inhibition or damage by O(2) under carbon- or phosphate-limited conditions. The protein is Uptake hydrogenase small subunit (hupA) of Bradyrhizobium diazoefficiens (strain JCM 10833 / BCRC 13528 / IAM 13628 / NBRC 14792 / USDA 110).